The chain runs to 342 residues: Anthranilate phosphoribosyltransferase (342 aa).

5-phospho-alpha-D-ribose 1-diphosphate-binding positions include glycine 83, 86–87 (GD), threonine 91, 93–96 (NIST), 111–119 (KHGGRSVSS), and alanine 123. Glycine 83 serves as a coordination point for anthranilate. Serine 95 contacts Mg(2+). Residue arginine 169 coordinates anthranilate. Mg(2+) is bound by residues aspartate 228 and glutamate 229.

This sequence belongs to the anthranilate phosphoribosyltransferase family. As to quaternary structure, homodimer. Mg(2+) is required as a cofactor.

The enzyme catalyses N-(5-phospho-beta-D-ribosyl)anthranilate + diphosphate = 5-phospho-alpha-D-ribose 1-diphosphate + anthranilate. It functions in the pathway amino-acid biosynthesis; L-tryptophan biosynthesis; L-tryptophan from chorismate: step 2/5. Functionally, catalyzes the transfer of the phosphoribosyl group of 5-phosphorylribose-1-pyrophosphate (PRPP) to anthranilate to yield N-(5'-phosphoribosyl)-anthranilate (PRA). This Neisseria gonorrhoeae (strain ATCC 700825 / FA 1090) protein is Anthranilate phosphoribosyltransferase.